The chain runs to 197 residues: MAVRPICIVGDPVLHTATEPIPVGPDGSLPADLADLITDLYDTMDAAHGVGLAANQIGVNKRVFVYDCADARKKTVRRRGVVVNPVLETSEVPETMPDPEDDDEGCLSVPGESFPTGRADWARVTGLDADGTPITIEGTDLFARMLQHETGHLDGFLYLDSLIGRNARAAKRAVKSHGWGVPGLTWMPGEDPDPFGH.

Positions 106 and 148 each coordinate Fe cation. The active site involves E149. Position 152 (H152) interacts with Fe cation.

This sequence belongs to the polypeptide deformylase family. The cofactor is Fe(2+).

It carries out the reaction N-terminal N-formyl-L-methionyl-[peptide] + H2O = N-terminal L-methionyl-[peptide] + formate. Functionally, removes the formyl group from the N-terminal Met of newly synthesized proteins. Requires at least a dipeptide for an efficient rate of reaction. N-terminal L-methionine is a prerequisite for activity but the enzyme has broad specificity at other positions. The protein is Peptide deformylase of Mycolicibacterium gilvum (strain PYR-GCK) (Mycobacterium gilvum (strain PYR-GCK)).